Reading from the N-terminus, the 429-residue chain is Probable M18 family aminopeptidase 2 (429 aa).

The Zn(2+) site is built by histidine 82, histidine 156, and histidine 401.

Belongs to the peptidase M18 family. Zn(2+) serves as cofactor.

This is Probable M18 family aminopeptidase 2 from Azotobacter vinelandii (strain DJ / ATCC BAA-1303).